A 475-amino-acid chain; its full sequence is Ankyrin repeat, SAM and basic leucine zipper domain-containing protein 1 (475 aa).

Residues 1–25 (MAAGALRGLPVAGGGESSESEDDGW) are disordered. Serine 17, serine 18, and serine 20 each carry phosphoserine. 6 ANK repeats span residues 45–74 (EKKE…SVDS), 78–107 (YGWT…NASF), 110–144 (DKQS…DPNV), 148–177 (RLMT…EVNT), 181–210 (NGYT…NKML), and 214–243 (DGKM…PLEG). Residues 272–334 (SYTAFGDLEV…KILAALKELQ (63 aa)) form the SAM domain.

As to quaternary structure, interacts with DDX4, PIWIL1, RANBP9 and TDRD1.

The protein resides in the cytoplasm. In terms of biological role, plays a central role during spermatogenesis by repressing transposable elements and preventing their mobilization, which is essential for the germline integrity. Acts via the piRNA metabolic process, which mediates the repression of transposable elements during meiosis by forming complexes composed of piRNAs and Piwi proteins and governs the methylation and subsequent repression of transposons. Its association with pi-bodies suggests a participation in the primary piRNAs metabolic process. Required prior to the pachytene stage to facilitate the production of multiple types of piRNAs, including those associated with repeats involved in the regulation of retrotransposons. May act by mediating protein-protein interactions during germ cell maturation. This chain is Ankyrin repeat, SAM and basic leucine zipper domain-containing protein 1 (ASZ1), found in Nomascus leucogenys (Northern white-cheeked gibbon).